The chain runs to 592 residues: Probable auxin efflux carrier component 1c (592 aa).

Residues 1-6 (MITGAD) are Extracellular-facing. A helical membrane pass occupies residues 7-27 (FYHVMTAMVPLYVAMILAYGS). The Cytoplasmic segment spans residues 28 to 38 (VKWWRIFTPDQ). Residues 39-59 (CSGINRFVALFAVPLLSFHFI) traverse the membrane as a helical segment. Residue V51 participates in (indol-3-yl)acetate binding. The Extracellular segment spans residues 60 to 70 (STNNPYTMNLR). A helical membrane pass occupies residues 71–91 (FIAADTLQKLIVLALLTLWSH). At 92-100 (LSRRGSLEW) the chain is on the cytoplasmic side. Residues 101–121 (TITLFSLSTLPNTLVMGIPLL) form a helical membrane-spanning segment. The (indol-3-yl)acetate site is built by N112 and L114. Topologically, residues 122-131 (KGMYGEFSGS) are extracellular. The helical transmembrane segment at 132-152 (LMVQIVVLQCIIWYTLMLFMF) threads the bilayer. (indol-3-yl)acetate is bound at residue Y145. The Cytoplasmic portion of the chain corresponds to 153-452 (EYRGARILIT…LIRNPNTYSS (300 aa)). 2 disordered regions span residues 214–236 (RSDVYSRRSMGFSSTTPRPSNLT) and 282–331 (GATP…AKGE). A compositionally biased stretch (polar residues) spans 224 to 236 (GFSSTTPRPSNLT). Residues 309–318 (APNPAMAAPP) show a composition bias toward pro residues. A helical transmembrane segment spans residues 453 to 473 (LIGLIWSLVCFRWNFEMPAII). Over 474-476 (LKS) the chain is Extracellular. The helical transmembrane segment at 477-497 (ISILSDAGLGMAMFSLGLFMA) threads the bilayer. Residues 498–511 (LQPRIIACGNKVAT) lie on the Cytoplasmic side of the membrane. Residues 512-532 (FAMAVRFLTGPAVMAAASIAV) traverse the membrane as a helical segment. The Extracellular segment spans residues 533-537 (GLRGT). Residues 538 to 558 (LLHVAIVQAALPQGIVPFVFA) form a helical membrane-spanning segment. The (indol-3-yl)acetate site is built by I552 and V553. Residues 559-571 (KEYSVHPDILSTA) are Cytoplasmic-facing. The chain crosses the membrane as a helical span at residues 572–592 (VIFGMLIALPITLVYYILLGL).

This sequence belongs to the auxin efflux carrier (TC 2.A.69.1) family. As to quaternary structure, homodimer. As to expression, expressed at low levels in roots and leaves. Expressed in roots, stem bases, stems, leaves and young panicles.

The protein localises to the membrane. May act as a component of the auxin efflux carrier. The polypeptide is Probable auxin efflux carrier component 1c (Oryza sativa subsp. japonica (Rice)).